The sequence spans 288 residues: Acetyl-coenzyme A carboxylase carboxyl transferase subunit beta (288 aa).

The region spanning 34–288 is the CoA carboxyltransferase N-terminal domain; the sequence is LWVKCSRCNE…ANILSLHGTN (255 aa). Zn(2+)-binding residues include Cys-38, Cys-41, Cys-57, and Cys-60. The C4-type zinc-finger motif lies at 38 to 60; it reads CSRCNEILYTKELDKNFKVCHKC.

This sequence belongs to the AccD/PCCB family. Acetyl-CoA carboxylase is a heterohexamer composed of biotin carboxyl carrier protein (AccB), biotin carboxylase (AccC) and two subunits each of ACCase subunit alpha (AccA) and ACCase subunit beta (AccD). Zn(2+) is required as a cofactor.

It is found in the cytoplasm. It catalyses the reaction N(6)-carboxybiotinyl-L-lysyl-[protein] + acetyl-CoA = N(6)-biotinyl-L-lysyl-[protein] + malonyl-CoA. Its pathway is lipid metabolism; malonyl-CoA biosynthesis; malonyl-CoA from acetyl-CoA: step 1/1. Its function is as follows. Component of the acetyl coenzyme A carboxylase (ACC) complex. Biotin carboxylase (BC) catalyzes the carboxylation of biotin on its carrier protein (BCCP) and then the CO(2) group is transferred by the transcarboxylase to acetyl-CoA to form malonyl-CoA. In Desulforamulus reducens (strain ATCC BAA-1160 / DSM 100696 / MI-1) (Desulfotomaculum reducens), this protein is Acetyl-coenzyme A carboxylase carboxyl transferase subunit beta.